The sequence spans 553 residues: Chaperonin GroEL 1 (553 aa).

Residues 29-32 (TIGP), 86-90 (DGTTT), G413, 476-478 (NAL), and D492 contribute to the ATP site. The interval 520 to 543 (DKPEPPAPAGGGGDPMGGMGGMDP) is disordered. The segment covering 528 to 543 (AGGGGDPMGGMGGMDP) has biased composition (gly residues).

The protein belongs to the chaperonin (HSP60) family. As to quaternary structure, forms a cylinder of 14 subunits composed of two heptameric rings stacked back-to-back. Interacts with the co-chaperonin GroES.

Its subcellular location is the cytoplasm. The catalysed reaction is ATP + H2O + a folded polypeptide = ADP + phosphate + an unfolded polypeptide.. In terms of biological role, together with its co-chaperonin GroES, plays an essential role in assisting protein folding. The GroEL-GroES system forms a nano-cage that allows encapsulation of the non-native substrate proteins and provides a physical environment optimized to promote and accelerate protein folding. The chain is Chaperonin GroEL 1 from Synechococcus sp. (strain CC9311).